The primary structure comprises 132 residues: Small ribosomal subunit protein uS8c (132 aa).

Belongs to the universal ribosomal protein uS8 family. In terms of assembly, part of the 30S ribosomal subunit.

The protein resides in the plastid. It localises to the chloroplast. In terms of biological role, one of the primary rRNA binding proteins, it binds directly to 16S rRNA central domain where it helps coordinate assembly of the platform of the 30S subunit. The chain is Small ribosomal subunit protein uS8c (rps8) from Nymphaea alba (White water-lily).